The following is a 1023-amino-acid chain: Sodium/potassium-transporting ATPase subunit alpha-1 (1023 aa).

A propeptide spanning residues 1–5 (MGLGK) is cleaved from the precursor. Over residues 1 to 11 (MGLGKGKDEYK) the composition is skewed to basic and acidic residues. The tract at residues 1-33 (MGLGKGKDEYKLAATSEDGGKKDKKAKAKKDMD) is disordered. The Cytoplasmic segment spans residues 6–87 (GKDEYKLAAT…NALTPPPTTP (82 aa)). S16 is modified (phosphoserine; by PKC). The segment at 82-84 (PPP) is interaction with phosphoinositide-3 kinase. Residues 88-108 (EWVKFCKQLFGGFSMLLWIGA) form a helical membrane-spanning segment. Residues 109-131 (ILCFLAYGIQAASEDEPANDNLY) are Extracellular-facing. Residues 132–152 (LGIVLSAVVIITGCFSYYQEA) traverse the membrane as a helical segment. The Cytoplasmic segment spans residues 153-288 (KSSKIMESFK…GGKTPIAIEI (136 aa)). The interval 216-237 (SSLTGESEPQTRSPDFSNENPL) is disordered. Residues 289–308 (EHFIHIITGVAVFLGVSFFI) traverse the membrane as a helical segment. Topologically, residues 309–320 (LSLILGYNWLEA) are extracellular. The helical transmembrane segment at 321–338 (VIFLIGIIVANVPEGLLA) threads the bilayer. Residues 339-772 (TVTVCLTLTA…EEGRLIFDNL (434 aa)) lie on the Cytoplasmic side of the membrane. The active-site 4-aspartylphosphate intermediate is D376. Position 487 (K487) interacts with ATP. Positions 717 and 721 each coordinate Mg(2+). Residues 773 to 792 (KKSIAYTLTSNIPEISPFLL) traverse the membrane as a helical segment. Topologically, residues 793-802 (FIIANIPLPL) are extracellular. A helical membrane pass occupies residues 803 to 823 (GTVTILCIDLGTDMVPAISLA). The Cytoplasmic portion of the chain corresponds to 824-843 (YEKAESDIMKRQPRNPKTDK). The helical transmembrane segment at 844–866 (LVNERLISIAYGQIGMMQATAGF) threads the bilayer. The Extracellular portion of the chain corresponds to 867–918 (FTYFVILAENGFLPMDLIGVRVLWDDKYVNDLEDSYGQQWTYERRKIVEYSC). The helical transmembrane segment at 919–938 (HTAFFASIVIVQWADLIICK) threads the bilayer. Residues 939–951 (TRRNSIVQQGMTN) are Cytoplasmic-facing. S943 bears the Phosphoserine; by PKA mark. The chain crosses the membrane as a helical span at residues 952–970 (RILIFGLFEETALAAFLSY). Over 971–985 (CPGMDVALRMYPMKP) the chain is Extracellular. The chain crosses the membrane as a helical span at residues 986-1006 (LWWFCAFPYSLLIFLYDEARR). Topologically, residues 1007 to 1023 (YILRRNPGGWVEKETYY) are cytoplasmic.

This sequence belongs to the cation transport ATPase (P-type) (TC 3.A.3) family. Type IIC subfamily. The sodium/potassium-transporting ATPase is composed of a catalytic alpha subunit, an auxiliary non-catalytic beta subunit and an additional regulatory subunit.

The protein resides in the cell membrane. It is found in the sarcolemma. The enzyme catalyses K(+)(out) + Na(+)(in) + ATP + H2O = K(+)(in) + Na(+)(out) + ADP + phosphate + H(+). Functionally, this is the catalytic component of the active enzyme, which catalyzes the hydrolysis of ATP coupled with the exchange of sodium and potassium ions across the plasma membrane. This action creates the electrochemical gradient of sodium and potassium ions, providing the energy for active transport of various nutrients. The protein is Sodium/potassium-transporting ATPase subunit alpha-1 (atp1a1) of Oreochromis mossambicus (Mozambique tilapia).